The sequence spans 305 residues: 17-beta-hydroxysteroid dehydrogenase type 3 (305 aa).

Residue 44-73 (GQWAVITGAGDGIGKAYSFELARHGLNVVL) participates in NADP(+) binding. Substrate is bound at residue serine 181. Tyrosine 194 acts as the Proton acceptor in catalysis.

Belongs to the short-chain dehydrogenases/reductases (SDR) family. 17-beta-HSD 3 subfamily. In terms of tissue distribution, expressed in the testes.

The protein localises to the endoplasmic reticulum. It catalyses the reaction a 17beta-hydroxy steroid + NADP(+) = a 17-oxo steroid + NADPH + H(+). The enzyme catalyses testosterone + NADP(+) = androst-4-ene-3,17-dione + NADPH + H(+). It carries out the reaction 17beta-estradiol + NADP(+) = estrone + NADPH + H(+). The catalysed reaction is 3beta-hydroxyandrost-5-en-17-one + NADPH + H(+) = androst-5-en-3beta,17beta-diol + NADP(+). It catalyses the reaction 17beta-hydroxy-5alpha-androstan-3-one + NADP(+) = 5alpha-androstan-3,17-dione + NADPH + H(+). The enzyme catalyses androsterone + NADPH + H(+) = 5alpha-androstane-3alpha,17beta-diol + NADP(+). It carries out the reaction 3beta-hydroxy-5alpha-androstan-17-one + NADPH + H(+) = 5alpha-androstane-3beta,17beta-diol + NADP(+). The catalysed reaction is androst-4-ene-3,11,17-trione + NADPH + H(+) = 17beta-hydroxyandrost-4-ene-3,11-dione + NADP(+). It catalyses the reaction 11beta-hydroxyandrost-4-ene-3,17-dione + NADPH + H(+) = 11beta,17beta-dihydroxyandrost-4-ene-3-one + NADP(+). It participates in hormone biosynthesis; testosterone biosynthesis. It functions in the pathway steroid metabolism. Catalyzes the conversion of 17-oxosteroids to 17beta-hydroxysteroids. Favors the reduction of androstenedione to testosterone. Testosterone is the key androgen driving male development and function. Uses NADPH while the two other EDH17B enzymes use NADH. Androgens such as epiandrosterone, dehydroepiandrosterone, androsterone and androstanedione are accepted as substrates and reduced at C-17. Can reduce 11-ketoandrostenedione as well as 11beta-hydroxyandrostenedione at C-17 to the respective testosterone forms. Plays a role in the rate-limiting-step for the maximum level of testosterone production by the testis but does not affect basal testosterone production. This chain is 17-beta-hydroxysteroid dehydrogenase type 3, found in Mus musculus (Mouse).